The primary structure comprises 416 residues: Calreticulin (416 aa).

The first 17 residues, 1-17 (MLLSVPLLLGLLGLAAA), serve as a signal peptide directing secretion. Positions 18–197 (DPAIYFKEQF…NSQVESGSLE (180 aa)) are N-domain. Glutamine 26 is a binding site for Ca(2+). Lysine 48 carries the post-translational modification N6-acetyllysine. Ca(2+) contacts are provided by lysine 62 and lysine 64. Position 64 is an N6-(2-hydroxyisobutyryl)lysine (lysine 64). A disulfide bridge links cysteine 105 with cysteine 137. The an alpha-D-glucoside site is built by tyrosine 109, lysine 111, tyrosine 128, and aspartate 135. Lysine 159 carries the post-translational modification N6-acetyllysine. Residues 191-202 (VESGSLEDDWDF) form a 1-1 repeat. Residues 191-255 (VESGSLEDDW…DAKKPEDWDE (65 aa)) form a 4 X approximate repeats region. Positions 193-277 (SGSLEDDWDF…NPEYKGEWKP (85 aa)) are disordered. Residues 198–308 (DDWDFLPPKK…YSPDANIYAY (111 aa)) form a P-domain region. The segment covering 207 to 251 (KIKDPDAAKPEDWDERAKIDDPTDSKPEDWDKPEHIPDPDAKKPE) has biased composition (basic and acidic residues). At lysine 209 the chain carries N6-acetyllysine. Tandem repeats lie at residues 210–221 (DPDAAKPEDWDE), 227–238 (DPTDSKPEDWDK), 244–255 (DPDAKKPEDWDE), 259–269 (GEWEPPVIQNP), 273–283 (GEWKPRQIDNP), and 287–297 (GTWIHPEIDNP). The interval 237 to 270 (DKPEHIPDPDAKKPEDWDEEMDGEWEPPVIQNPE) is interaction with PPIB. Over residues 252–261 (DWDEEMDGEW) the composition is skewed to acidic residues. The segment at 259–297 (GEWEPPVIQNPEYKGEWKPRQIDNPDYKGTWIHPEIDNP) is 3 X approximate repeats. The interval 309 to 416 (DSFAVLGLDL…ESPGQAKDEL (108 aa)) is C-domain. Residue aspartate 317 coordinates an alpha-D-glucoside. Aspartate 328 lines the Ca(2+) pocket. The tract at residues 350-416 (TKAAEKQMKD…ESPGQAKDEL (67 aa)) is disordered. Residues 352–379 (AAEKQMKDKQDEEQRLKEEEEDKKRKEE) are compositionally biased toward basic and acidic residues. The segment covering 380–408 (EEAEDKEDDDDRDEDEDEEDEKEEDEEES) has biased composition (acidic residues). The Prevents secretion from ER signature appears at 413–416 (KDEL).

Belongs to the calreticulin family. In terms of assembly, monomer. Interacts with GABARAP, NR3C1, PDIA3/ERp57 and TRIM21. Interacts (via P-domain) with PDIA5. Interacts with PPIB. Interacts with SPACA9. Component of an EIF2 complex at least composed of CELF1/CUGBP1, CALR, CALR3, EIF2S1, EIF2S2, HSP90B1 and HSPA5. Interacts with CLCC1.

It localises to the endoplasmic reticulum lumen. The protein resides in the cytoplasm. It is found in the cytosol. Its subcellular location is the cytolytic granule. The protein localises to the secreted. It localises to the extracellular space. The protein resides in the extracellular matrix. It is found in the cell surface. Its subcellular location is the sarcoplasmic reticulum lumen. The protein localises to the cytoplasmic vesicle. It localises to the secretory vesicle. The protein resides in the cortical granule. Calcium-binding chaperone that promotes folding, oligomeric assembly and quality control in the endoplasmic reticulum (ER) via the calreticulin/calnexin cycle. This lectin interacts transiently with almost all of the monoglucosylated glycoproteins that are synthesized in the ER. Interacts with the DNA-binding domain of NR3C1 and mediates its nuclear export. Involved in maternal gene expression regulation. May participate in oocyte maturation via the regulation of calcium homeostasis. Present in the cortical granules of non-activated oocytes, is exocytosed during the cortical reaction in response to oocyte activation and might participate in the block to polyspermy. This is Calreticulin (Calr) from Mus musculus (Mouse).